The sequence spans 214 residues: Type IV major pilin protein PilE1 (214 aa).

A propeptide spans 1-7 (leader sequence); it reads MNTLQKG. Phenylalanine 8 carries the post-translational modification N-methylphenylalanine. Residues 8–28 form a helical membrane-spanning segment; that stretch reads FTLIELMIVIAIVGILAAVAL. The cysteines at positions 127 and 161 are disulfide-linked. Residues 182 to 214 form a disordered region; that stretch reads AGTDAVTADTTGKDKEIDTKHLPSTCRDKSSAE. Positions 192–214 are enriched in basic and acidic residues; it reads TGKDKEIDTKHLPSTCRDKSSAE.

This sequence belongs to the N-Me-Phe pilin family. The pili are polar flexible filaments of about 5.4 nanometers diameter and 2.5 micrometers average length; they consist of only a single polypeptide chain arranged in a helical configuration of five subunits per turn in the assembled pilus.

The protein localises to the fimbrium. It localises to the membrane. In terms of biological role, major component of the type IV pilus (T4P) that plays a role in cellular adherence, microcolony formation, resistance to neutrophil mediated killing, twitching motility as well as transformation. Mediates the attachment and the formation of bacterial microcolonies on host epithelial cells. Mechanistically, pili retractation induces host NF-kappa-B activation in infected cells, which is temporally associated with the formation of gonococcal microcolonies. The polypeptide is Type IV major pilin protein PilE1 (pilE1) (Neisseria gonorrhoeae).